The chain runs to 245 residues: tRNA pseudouridine synthase A (245 aa).

The active-site Nucleophile is the D52. Y111 provides a ligand contact to substrate.

The protein belongs to the tRNA pseudouridine synthase TruA family. As to quaternary structure, homodimer.

The catalysed reaction is uridine(38/39/40) in tRNA = pseudouridine(38/39/40) in tRNA. Its function is as follows. Formation of pseudouridine at positions 38, 39 and 40 in the anticodon stem and loop of transfer RNAs. The protein is tRNA pseudouridine synthase A of Ehrlichia chaffeensis (strain ATCC CRL-10679 / Arkansas).